A 253-amino-acid chain; its full sequence is PAXIP1-associated glutamate-rich protein 1A (253 aa).

Disordered regions lie at residues 1 to 108 (MSLA…MPPP) and 126 to 253 (LQAE…QRKY). Over residues 45–66 (KAEEEGKGSQEEAGREGSRPEE) the composition is skewed to basic and acidic residues. Positions 115–159 (YELLATQGTLELQAEILPRRPPTPEAQSEEERSDEEPEAKEEEEE) are sufficient for interaction with NCOA1. Threonine 137 is subject to Phosphothreonine. Over residues 141-158 (QSEEERSDEEPEAKEEEE) the composition is skewed to acidic residues. A phosphoserine mark is found at serine 142 and serine 147. The tract at residues 160–253 (KPHMPTEFDF…NSLFPRQRKY (94 aa)) is sufficient for interaction with ESR1. Positions 194 to 222 (QKREARLDKVLSDMKRHKKLEEQILRTGR) are enriched in basic and acidic residues. A Phosphoserine modification is found at serine 236. Over residues 238–247 (PLRSSGNSLF) the composition is skewed to polar residues.

Component of the KMT2 family MLL2/MLL3 complex, at least composed of the histone methyltransferases KMT2D and/or KMT2C, the common subunits ASH2L, RBBP5, WDR5 and DPY30, and the complex type-specific subunits PAXIP1/PTIP, PAGR1, NCOA6 and KDM6A; PAXIP1 is required for the association with the MLL2/MLL3 complex. Forms a constitutive complex with PAXIP1/PTIP independently of the MLL2/MLL3 complex. Interacts with NCOA1, ESR1, NR3C1, AR.

The protein localises to the nucleus. Functionally, its association with the histone methyltransferase MLL2/MLL3 complex is suggesting a role in epigenetic transcriptional activation. However, in association with PAXIP1/PTIP is proposed to function at least in part independently of the MLL2/MLL3 complex. Proposed to be recruited by PAXIP1 to sites of DNA damage where the PAGR1:PAXIP1 complex is required for cell survival in response to DNA damage independently of the MLL2/MLL3 complex. However, its function in DNA damage has been questioned. During immunoglobulin class switching in activated B-cells is involved in transcription regulation of downstream switch regions at the immunoglobulin heavy-chain (Igh) locus independently of the MLL2/MLL3 complex. Involved in both estrogen receptor-regulated gene transcription and estrogen-stimulated G1/S cell-cycle transition. Acts as a transcriptional cofactor for nuclear hormone receptors. Inhibits the induction properties of several steroid receptors such as NR3C1, AR and PPARG; the mechanism of inhibition appears to be gene-dependent. May be involved in the regulation of the BMP pathway in extraembryonic development. The polypeptide is PAXIP1-associated glutamate-rich protein 1A (Mus musculus (Mouse)).